We begin with the raw amino-acid sequence, 358 residues long: Type II methyltransferase M.HpaII (358 aa).

Positions 32–356 constitute an SAM-dependent MTase C5-type domain; sequence FTFIDLFAGI…KKILEKLGNL (325 aa). Cys-103 is a catalytic residue.

Belongs to the class I-like SAM-binding methyltransferase superfamily. C5-methyltransferase family. As to quaternary structure, monomer.

The catalysed reaction is a 2'-deoxycytidine in DNA + S-adenosyl-L-methionine = a 5-methyl-2'-deoxycytidine in DNA + S-adenosyl-L-homocysteine + H(+). A methylase that recognizes the double-stranded sequence 5'-CCGG-3', methylates C-2 on both strands, and protects the DNA from cleavage by the HpaII endonuclease. The chain is Type II methyltransferase M.HpaII from Haemophilus parainfluenzae.